Here is a 456-residue protein sequence, read N- to C-terminus: Probable flavin-containing monoamine oxidase A (456 aa).

At Cys-394 the chain carries S-8alpha-FAD cysteine.

The protein belongs to the flavin monoamine oxidase family. Requires FAD as cofactor.

It carries out the reaction a secondary aliphatic amine + O2 + H2O = a primary amine + an aldehyde + H2O2. The protein is Probable flavin-containing monoamine oxidase A (maoA) of Dictyostelium discoideum (Social amoeba).